We begin with the raw amino-acid sequence, 134 residues long: ATP synthase epsilon chain, chloroplastic (134 aa).

It belongs to the ATPase epsilon chain family. In terms of assembly, F-type ATPases have 2 components, CF(1) - the catalytic core - and CF(0) - the membrane proton channel. CF(1) has five subunits: alpha(3), beta(3), gamma(1), delta(1), epsilon(1). CF(0) has three main subunits: a, b and c.

It localises to the plastid. Its subcellular location is the chloroplast thylakoid membrane. Functionally, produces ATP from ADP in the presence of a proton gradient across the membrane. The sequence is that of ATP synthase epsilon chain, chloroplastic from Gracilaria tenuistipitata var. liui (Red alga).